The primary structure comprises 67 residues: Protein AaeX (67 aa).

2 consecutive transmembrane segments (helical) span residues 3 to 23 and 43 to 63; these read LFPVIVVFGLSFPPIFFKLLL and FVWHPALFNTALYCCLFYLIS.

This sequence belongs to the AaeX family.

Its subcellular location is the cell membrane. This Salmonella gallinarum (strain 287/91 / NCTC 13346) protein is Protein AaeX.